The chain runs to 380 residues: Cytochrome b (380 aa).

Helical transmembrane passes span Phe-33–Met-53, Trp-77–Ile-98, Trp-113–Leu-133, and Phe-178–Leu-198. Heme b-binding residues include His-83 and His-97. 2 residues coordinate heme b: His-182 and His-196. His-201 contacts a ubiquinone. Helical transmembrane passes span Tyr-226–Ser-246, Leu-288–His-308, Ile-320–Gly-340, and Phe-347–Pro-367.

This sequence belongs to the cytochrome b family. As to quaternary structure, the cytochrome bc1 complex contains 3 respiratory subunits (MT-CYB, CYC1 and UQCRFS1), 2 core proteins (UQCRC1 and UQCRC2) and probably 6 low-molecular weight proteins. It depends on heme b as a cofactor.

The protein localises to the mitochondrion inner membrane. Component of the ubiquinol-cytochrome c reductase complex (complex III or cytochrome b-c1 complex) that is part of the mitochondrial respiratory chain. The b-c1 complex mediates electron transfer from ubiquinol to cytochrome c. Contributes to the generation of a proton gradient across the mitochondrial membrane that is then used for ATP synthesis. The protein is Cytochrome b (mt-cyb) of Dactyloptena peterseni (Starry flying gurnard).